Consider the following 401-residue polypeptide: 2,3,4,5-tetrahydropyridine-2,6-dicarboxylate N-succinyltransferase (401 aa).

Glutamate 269 serves as the catalytic Acyl-anhydride intermediate. Succinyl-CoA contacts are provided by residues arginine 271, glycine 286, serine 289, alanine 312, 327–328, glycine 335, and lysine 364; that span reads DA.

Belongs to the type 2 tetrahydrodipicolinate N-succinyltransferase family. Homotrimer.

It is found in the cytoplasm. The enzyme catalyses (S)-2,3,4,5-tetrahydrodipicolinate + succinyl-CoA + H2O = (S)-2-succinylamino-6-oxoheptanedioate + CoA. The protein operates within amino-acid biosynthesis; L-lysine biosynthesis via DAP pathway; LL-2,6-diaminopimelate from (S)-tetrahydrodipicolinate (succinylase route): step 1/3. Functionally, catalyzes the conversion of the cyclic tetrahydrodipicolinate (THDP) into the acyclic N-succinyl-L-2-amino-6-oxopimelate using succinyl-CoA. This chain is 2,3,4,5-tetrahydropyridine-2,6-dicarboxylate N-succinyltransferase, found in Helicobacter pylori (strain ATCC 700392 / 26695) (Campylobacter pylori).